The sequence spans 287 residues: Transcription initiation factor IIB 1 (287 aa).

The segment at 3–31 adopts a TFIIB-type zinc-finger fold; that stretch reads HPHRCPECDGTIRETDTEHVCADCGLVVT. Zn(2+) contacts are provided by C7, C10, C23, and C26. Residues 40–53 show a composition bias toward basic and acidic residues; that stretch reads EWRTFSDDPDHAPE. The interval 40 to 63 is disordered; the sequence is EWRTFSDDPDHAPERTGAPLTRSR. 2 repeat units span residues 111-194 and 205-286.

It belongs to the TFIIB family.

Functionally, stabilizes TBP binding to an archaeal box-A promoter. Also responsible for recruiting RNA polymerase II to the pre-initiation complex (DNA-TBP-TFIIB). The sequence is that of Transcription initiation factor IIB 1 from Halobacterium salinarum (strain ATCC 700922 / JCM 11081 / NRC-1) (Halobacterium halobium).